The following is a 274-amino-acid chain: 4-hydroxy-tetrahydrodipicolinate reductase (274 aa).

7–12 is an NAD(+) binding site; the sequence is GVTGRM. Residue R40 participates in NADP(+) binding. NAD(+)-binding positions include 103–105 and 127–130; these read GTT and SANF. H160 serves as the catalytic Proton donor/acceptor. Residue H161 participates in (S)-2,3,4,5-tetrahydrodipicolinate binding. K164 (proton donor) is an active-site residue. A (S)-2,3,4,5-tetrahydrodipicolinate-binding site is contributed by 170–171; sequence GT.

Belongs to the DapB family. Homotetramer.

It localises to the cytoplasm. The catalysed reaction is (S)-2,3,4,5-tetrahydrodipicolinate + NAD(+) + H2O = (2S,4S)-4-hydroxy-2,3,4,5-tetrahydrodipicolinate + NADH + H(+). The enzyme catalyses (S)-2,3,4,5-tetrahydrodipicolinate + NADP(+) + H2O = (2S,4S)-4-hydroxy-2,3,4,5-tetrahydrodipicolinate + NADPH + H(+). It functions in the pathway amino-acid biosynthesis; L-lysine biosynthesis via DAP pathway; (S)-tetrahydrodipicolinate from L-aspartate: step 4/4. In terms of biological role, catalyzes the conversion of 4-hydroxy-tetrahydrodipicolinate (HTPA) to tetrahydrodipicolinate. The polypeptide is 4-hydroxy-tetrahydrodipicolinate reductase (Blochmanniella floridana).